The chain runs to 462 residues: Probable peptidoglycan glycosyltransferase FtsW (462 aa).

Residues 1–28 are disordered; the sequence is MREPRHVPQLRASGRRFPQRGRRHRFGK. Residues 1–92 lie on the Cytoplasmic side of the membrane; sequence MREPRHVPQL…RSRMLDFDYS (92 aa). Positions 13-27 are enriched in basic residues; sequence SGRRFPQRGRRHRFG. The chain crosses the membrane as a helical span at residues 93–113; it reads LLWVSIALLGLGVVMVYSASI. The Periplasmic segment spans residues 114-127; that stretch reads AMPDSPKYASYHDY. Residues 128-148 form a helical membrane-spanning segment; it reads AFLLRHCVSLVVAFVAAVIAF. The Cytoplasmic segment spans residues 149-158; sequence RVPVSTWDKY. A helical transmembrane segment spans residues 159–179; it reads APHLFLIALVGLVIVLIPHIG. At 180-192 the chain is on the periplasmic side; sequence KGVNGARRWIPLG. A helical transmembrane segment spans residues 193-215; it reads ITNMQPSEIMKLAVTIYAANYTV. Residues 216–223 lie on the Cytoplasmic side of the membrane; sequence RKQEYMQS. A helical membrane pass occupies residues 224–244; the sequence is FAKGFLPMAFAVGLVGALLLL. Over 245 to 247 the chain is Periplasmic; the sequence is EPD. The chain crosses the membrane as a helical span at residues 248-268; the sequence is MGAFMVVAAIAMGVLFLGGVN. Residues 269 to 270 lie on the Cytoplasmic side of the membrane; that stretch reads GK. The helical transmembrane segment at 271–291 threads the bilayer; it reads LFGGLVATAVGTFTMLVWLSP. Residues 292–349 lie on the Periplasmic side of the membrane; that stretch reads WRRERIFAYLDPWDERYAQGKAYQLTHSLIAFGRGEWFGVGLGGSVEKLNYLPEAHTD. Residues 350–370 form a helical membrane-spanning segment; that stretch reads FILAVIGEELGFVGVLVVILL. Topologically, residues 371-398 are cytoplasmic; sequence FYWIVRRSFEIGRQALALDRTFAGLMAK. Residues 399 to 419 traverse the membrane as a helical segment; the sequence is GVGIWFGAQAFINMGVNLGLL. Topologically, residues 420–425 are periplasmic; that stretch reads PTKGLT. A helical transmembrane segment spans residues 426–446; it reads LPLVSYGGSGILLNCISLAVL. Topologically, residues 447-462 are cytoplasmic; it reads LRVDYENRVLMRGGKV.

It belongs to the SEDS family. FtsW subfamily.

It is found in the cell inner membrane. The enzyme catalyses [GlcNAc-(1-&gt;4)-Mur2Ac(oyl-L-Ala-gamma-D-Glu-L-Lys-D-Ala-D-Ala)](n)-di-trans,octa-cis-undecaprenyl diphosphate + beta-D-GlcNAc-(1-&gt;4)-Mur2Ac(oyl-L-Ala-gamma-D-Glu-L-Lys-D-Ala-D-Ala)-di-trans,octa-cis-undecaprenyl diphosphate = [GlcNAc-(1-&gt;4)-Mur2Ac(oyl-L-Ala-gamma-D-Glu-L-Lys-D-Ala-D-Ala)](n+1)-di-trans,octa-cis-undecaprenyl diphosphate + di-trans,octa-cis-undecaprenyl diphosphate + H(+). Its pathway is cell wall biogenesis; peptidoglycan biosynthesis. Peptidoglycan polymerase that is essential for cell division. This is Probable peptidoglycan glycosyltransferase FtsW from Burkholderia thailandensis (strain ATCC 700388 / DSM 13276 / CCUG 48851 / CIP 106301 / E264).